The chain runs to 128 residues: Cytochrome c' (128 aa).

Gln13, Gln17, Glu69, Thr70, Cys118, Cys121, and His122 together coordinate heme c.

Post-translationally, binds 1 heme c group covalently per subunit.

Cytochrome c' is the most widely occurring bacterial c-type cytochrome. Cytochromes c' are high-spin proteins and the heme has no sixth ligand. Their exact function is not known. The protein is Cytochrome c' of Magnetospirillum fulvum (Rhodospirillum fulvum).